The following is a 490-amino-acid chain: ATP synthase subunit alpha 1 (490 aa).

Residue 171-178 coordinates ATP; that stretch reads GDNGLGKS.

The protein belongs to the ATPase alpha/beta chains family. F-type ATPases have 2 components, CF(1) - the catalytic core - and CF(0) - the membrane proton channel. CF(1) has five subunits: alpha(3), beta(3), gamma(1), delta(1), epsilon(1). CF(0) has three main subunits: a(1), b(2) and c(9-12). The alpha and beta chains form an alternating ring which encloses part of the gamma chain. CF(1) is attached to CF(0) by a central stalk formed by the gamma and epsilon chains, while a peripheral stalk is formed by the delta and b chains.

It localises to the cell inner membrane. The catalysed reaction is ATP + H2O + 4 H(+)(in) = ADP + phosphate + 5 H(+)(out). In terms of biological role, produces ATP from ADP in the presence of a proton gradient across the membrane. The alpha chain is a regulatory subunit. This is ATP synthase subunit alpha 1 from Legionella pneumophila (strain Corby).